A 481-amino-acid polypeptide reads, in one-letter code: Dihydrolipoyl dehydrogenase (481 aa).

Residues 34-42 and Lys51 each bind FAD; that span reads EREHMGGIC. Residues Cys42 and Cys47 are joined by a disulfide bond. NAD(+) is bound by residues 195 to 199, Glu218, and 284 to 287; these read GSGAI and AVGV. Positions 326 and 334 each coordinate FAD. His460 functions as the Proton acceptor in the catalytic mechanism.

It belongs to the class-I pyridine nucleotide-disulfide oxidoreductase family. As to quaternary structure, homodimer. Requires FAD as cofactor.

The protein localises to the cytoplasm. The enzyme catalyses N(6)-[(R)-dihydrolipoyl]-L-lysyl-[protein] + NAD(+) = N(6)-[(R)-lipoyl]-L-lysyl-[protein] + NADH + H(+). In terms of biological role, lipoamide dehydrogenase is a component of the alpha-ketoacid dehydrogenase complexes. The protein is Dihydrolipoyl dehydrogenase (lpdA) of Rhizobium etli (strain ATCC 51251 / DSM 11541 / JCM 21823 / NBRC 15573 / CFN 42).